A 469-amino-acid chain; its full sequence is MEHHQPEHPAPGETRTAEAVSPENHKVLSEPKEHPQDKDAKEADGAAGEQEPVDQASLPAQGQDNFESPPPDASSSQPGPARETRPETETAGACSRLQELPQSPRARQPELDFYCVKWIPWKGEQTPIITQSANGPCPLIAIANILFLQWKVKLPPQKEVITSDELMAHLGDCLLSIKPQEKSEGLQLNFQQNVDDAMTVLPKLATGLDVNVRFTGVSDFEYTPECSVFDLLGIPLYHGWLVDPQSPEAVSAVGKLSYNQLVEKIITCKHSSDTNLVTEGLIAEQFLETTAAQLTYHGLCELTAAAKEGELSVFFRNNHFSTMTKHKGHLYLLVTDQGFLQEEQVVWESLHNVDGDSCFCDSDFHLSHSPGKGPGTGGGSGSPEKQRQVDQDYLIALSLQQQQPPPQGTSGLSDLELAQQLQQEEYQQHQAAQAAPARAPSPQGRGAASGRPAAERRQRPKQESDCVLL.

Positions 1–105 (MEHHQPEHPA…RLQELPQSPR (105 aa)) are disordered. A compositionally biased stretch (basic and acidic residues) spans 23–44 (ENHKVLSEPKEHPQDKDAKEAD). S103 is subject to Phosphoserine. Residue C137 is the Nucleophile of the active site. H319 (proton acceptor) is an active-site residue. The tract at residues 388–428 (QVDQDYLIALSLQQQQPPPQGTSGLSDLELAQQLQQEEYQQ) is ubiquitin-binding domain (UBD). The interval 401-469 (QQQPPPQGTS…PKQESDCVLL (69 aa)) is disordered. Residues 415–448 (LELAQQLQQEEYQQHQAAQAAPARAPSPQGRGAA) show a composition bias toward low complexity. At S441 the chain carries Phosphoserine. Residues 453–469 (AAERRQRPKQESDCVLL) are compositionally biased toward basic and acidic residues.

Belongs to the MINDY deubiquitinase family. FAM63 subfamily.

It carries out the reaction Thiol-dependent hydrolysis of ester, thioester, amide, peptide and isopeptide bonds formed by the C-terminal Gly of ubiquitin (a 76-residue protein attached to proteins as an intracellular targeting signal).. Its function is as follows. Hydrolase that can specifically remove 'Lys-48'-linked conjugated ubiquitin from proteins. Has exodeubiquitinase activity and has a preference for long polyubiquitin chains. May play a regulatory role at the level of protein turnover. The chain is Ubiquitin carboxyl-terminal hydrolase MINDY-1 (MINDY1) from Bos taurus (Bovine).